Consider the following 229-residue polypeptide: Putative N-acetylmannosamine-6-phosphate 2-epimerase (229 aa).

This sequence belongs to the NanE family.

It catalyses the reaction an N-acyl-D-glucosamine 6-phosphate = an N-acyl-D-mannosamine 6-phosphate. It functions in the pathway amino-sugar metabolism; N-acetylneuraminate degradation; D-fructose 6-phosphate from N-acetylneuraminate: step 3/5. Its function is as follows. Converts N-acetylmannosamine-6-phosphate (ManNAc-6-P) to N-acetylglucosamine-6-phosphate (GlcNAc-6-P). The chain is Putative N-acetylmannosamine-6-phosphate 2-epimerase from Escherichia coli O157:H7.